A 299-amino-acid polypeptide reads, in one-letter code: Acetaldehyde dehydrogenase 1 (299 aa).

The active-site Acyl-thioester intermediate is Cys-130. Residues 161-169 (SVGPGTRKN) and Asn-272 contribute to the NAD(+) site.

Belongs to the acetaldehyde dehydrogenase family.

It catalyses the reaction acetaldehyde + NAD(+) + CoA = acetyl-CoA + NADH + H(+). This chain is Acetaldehyde dehydrogenase 1 (mhpF), found in Burkholderia cenocepacia (strain ATCC BAA-245 / DSM 16553 / LMG 16656 / NCTC 13227 / J2315 / CF5610) (Burkholderia cepacia (strain J2315)).